Reading from the N-terminus, the 405-residue chain is Glucose-1-phosphate adenylyltransferase (405 aa).

Alpha-D-glucose 1-phosphate-binding positions include Tyr-96, Gly-161, 176-177 (EK), and Ser-194.

Belongs to the bacterial/plant glucose-1-phosphate adenylyltransferase family. Homotetramer.

It carries out the reaction alpha-D-glucose 1-phosphate + ATP + H(+) = ADP-alpha-D-glucose + diphosphate. It participates in glycan biosynthesis; glycogen biosynthesis. In terms of biological role, involved in the biosynthesis of ADP-glucose, a building block required for the elongation reactions to produce glycogen. Catalyzes the reaction between ATP and alpha-D-glucose 1-phosphate (G1P) to produce pyrophosphate and ADP-Glc. The chain is Glucose-1-phosphate adenylyltransferase from Aliivibrio fischeri (strain MJ11) (Vibrio fischeri).